The primary structure comprises 419 residues: Effector protein BipC (419 aa).

2 disordered regions span residues 62-94 (VAGS…GLER) and 338-402 (LQSG…AKSQ). 2 stretches are compositionally biased toward basic and acidic residues: residues 71-94 (ELAR…GLER) and 380-392 (TRDE…REAA).

The protein belongs to the SctB/SipC family.

It is found in the secreted. This is Effector protein BipC (bipC) from Burkholderia pseudomallei (strain 1710b).